The chain runs to 93 residues: Cell division topological specificity factor (93 aa).

It belongs to the MinE family.

In terms of biological role, prevents the cell division inhibition by proteins MinC and MinD at internal division sites while permitting inhibition at polar sites. This ensures cell division at the proper site by restricting the formation of a division septum at the midpoint of the long axis of the cell. The protein is Cell division topological specificity factor of Syntrophus aciditrophicus (strain SB).